The following is a 155-amino-acid chain: Molybdopterin synthase catalytic subunit 2 (155 aa).

Residues 101 to 102, lysine 117, and 124 to 126 contribute to the substrate site; these read HR and KKE.

It belongs to the MoaE family. MOCS2B subfamily. In terms of assembly, heterotetramer; composed of 2 small (MOCS2A) and 2 large (MOCS2B) subunits.

The protein localises to the cytoplasm. The catalysed reaction is 2 [molybdopterin-synthase sulfur-carrier protein]-C-terminal-Gly-aminoethanethioate + cyclic pyranopterin phosphate + H2O = molybdopterin + 2 [molybdopterin-synthase sulfur-carrier protein]-C-terminal Gly-Gly + 2 H(+). Its pathway is cofactor biosynthesis; molybdopterin biosynthesis. Catalytic subunit of the molybdopterin synthase complex, a complex that catalyzes the conversion of precursor Z into molybdopterin. Acts by mediating the incorporation of 2 sulfur atoms from thiocarboxylated MOCS2A into precursor Z to generate a dithiolene group. This chain is Molybdopterin synthase catalytic subunit 2, found in Aedes aegypti (Yellowfever mosquito).